Here is a 240-residue protein sequence, read N- to C-terminus: Aliphatic sulfonates import ATP-binding protein SsuB (240 aa).

The ABC transporter domain occupies 6 to 227; sequence IQLSKLRKNF…VKDRHFACFE (222 aa). 38-45 is an ATP binding site; it reads GESGCGKS.

Belongs to the ABC transporter superfamily. Aliphatic sulfonates importer (TC 3.A.1.17.2) family. The complex is composed of two ATP-binding proteins (SsuB), two transmembrane proteins (SsuC) and a solute-binding protein (SsuA).

It localises to the cell inner membrane. It catalyses the reaction ATP + H2O + aliphatic sulfonate-[sulfonate-binding protein]Side 1 = ADP + phosphate + aliphatic sulfonateSide 2 + [sulfonate-binding protein]Side 1.. Its function is as follows. Part of the ABC transporter complex SsuABC involved in aliphatic sulfonates import. Responsible for energy coupling to the transport system. This chain is Aliphatic sulfonates import ATP-binding protein SsuB, found in Zymomonas mobilis subsp. mobilis (strain ATCC 31821 / ZM4 / CP4).